The sequence spans 125 residues: Small ribosomal subunit protein eS8 (125 aa).

The interval 1 to 36 is disordered; that stretch reads MKDQGRSTRKRTGGRLHDVSKKKRHQLGREPAETTV. The segment covering 7–26 has biased composition (basic residues); that stretch reads STRKRTGGRLHDVSKKKRHQ. Positions 27–36 are enriched in basic and acidic residues; that stretch reads LGREPAETTV.

Belongs to the eukaryotic ribosomal protein eS8 family. As to quaternary structure, part of the 30S ribosomal subunit.

The chain is Small ribosomal subunit protein eS8 from Haloquadratum walsbyi (strain DSM 16790 / HBSQ001).